Consider the following 195-residue polypeptide: Thymidine kinase (195 aa).

Residues G15–S22 and D88–Q91 each bind ATP. The active-site Proton acceptor is E89. Residues C145, C148, C183, and C186 each coordinate Zn(2+).

Belongs to the thymidine kinase family. As to quaternary structure, homotetramer.

It localises to the cytoplasm. The enzyme catalyses thymidine + ATP = dTMP + ADP + H(+). The sequence is that of Thymidine kinase from Bacillus cereus (strain ZK / E33L).